We begin with the raw amino-acid sequence, 256 residues long: uncharacterized protein (256 aa).

The signal sequence occupies residues 1-24; it reads MIKRVNKLVLGISLLFLVISITAG. Cys25 carries N-palmitoyl cysteine lipidation. The S-diacylglycerol cysteine moiety is linked to residue Cys25.

It belongs to the staphylococcal tandem lipoprotein family.

Its subcellular location is the cell membrane. This is an uncharacterized protein from Staphylococcus aureus.